The primary structure comprises 172 residues: Disulfide bond formation protein B (172 aa).

Residues 1–13 are Cytoplasmic-facing; sequence MIIRLAGMSVRQG. A helical membrane pass occupies residues 14–30; that stretch reads CLLGLLMCALMMGVALV. At 31–48 the chain is on the periplasmic side; it reads LQYVYGLTPCPLCIGQRI. A disulfide bond links C40 and C43. Residues 49–65 form a helical membrane-spanning segment; that stretch reads AVLLAAFVFAIGALHNP. Residues 66 to 72 are Cytoplasmic-facing; the sequence is AGNLGRG. The helical transmembrane segment at 73-90 threads the bilayer; it reads LYAGLAALASVLGLAVAA. The Periplasmic portion of the chain corresponds to 91–147; it reads RHVWLQSLPPENVPSCGPGLDYMMEVLPLWDVLSRVLAGSGECAEIHGSLLGMSIPQ. A disulfide bridge connects residues C106 and C133. The chain crosses the membrane as a helical span at residues 148 to 166; it reads WTLLGFAVLLLIPLGMLAG. Residues 167-172 lie on the Cytoplasmic side of the membrane; sequence IVIRRR.

Belongs to the DsbB family.

The protein localises to the cell inner membrane. In terms of biological role, required for disulfide bond formation in some periplasmic proteins. Acts by oxidizing the DsbA protein. The protein is Disulfide bond formation protein B of Chromohalobacter salexigens (strain ATCC BAA-138 / DSM 3043 / CIP 106854 / NCIMB 13768 / 1H11).